We begin with the raw amino-acid sequence, 402 residues long: MTQIAYFDCPTGIAGNMCLGALVDAGVPLSYLEQQLQRLSLSEPYQLVATPVLRQGMAATYVEVQIEAAPHAHRHLSHIVALIEAAGLPDRVRDWSIAVFQQLAIAEAAVHGVTPEQVHFHEVGATDAIVDIVGTCLGLDYLGIEAVYCSALPTGGGTVKAAHGQLSVPVPAVLRLWQLRQVPVYSNGIERELVTPTGAAIAVTLAKSFGPPPSLQLQKTGWGAGSHDLPIPNLLKLWIGTASDLVMTPQSPEGSLETVQVIETQIDDCSPQVLAYVSEQLLAQGALEVFSQAITMKKGRLGTLLTIICQPDQQAACETILFRETTTIGLRFRREQRRVLPRRRDRVQTPWGEVRVKVAGDPQSPLTVQPEYEDCRAIAQAQQIALHHIQTVAQQQWQQENA.

It belongs to the LarC family.

The polypeptide is Putative nickel insertion protein (Synechococcus elongatus (strain ATCC 33912 / PCC 7942 / FACHB-805) (Anacystis nidulans R2)).